We begin with the raw amino-acid sequence, 392 residues long: G2/mitotic-specific cyclin-B2 (392 aa).

It belongs to the cyclin family. Cyclin AB subfamily. In terms of assembly, interacts with the CDK1 protein kinase to form a serine/threonine kinase holoenzyme complex also known as maturation promoting factor (MPF). The cyclin subunit imparts substrate specificity to the complex.

Essential for the control of the cell cycle at the G2/M (mitosis) transition. This chain is G2/mitotic-specific cyclin-B2 (CCNB2), found in Rana japonica (Japanese reddish frog).